A 1257-amino-acid polypeptide reads, in one-letter code: Receptor tyrosine-protein kinase erbB-2 (1257 aa).

The first 22 residues, 1 to 22, serve as a signal peptide directing secretion; sequence MELAAWCRWGFLLALLPPGIAG. Residues 23–654 lie on the Extracellular side of the membrane; it reads TQVCTGTDMK…PAEQRASPVT (632 aa). A disulfide bridge links Cys26 with Cys53. Residues Asn68 and Asn188 are each glycosylated (N-linked (GlcNAc...) asparagine). 16 disulfides stabilise this stretch: Cys163–Cys193, Cys196–Cys205, Cys200–Cys213, Cys221–Cys228, Cys225–Cys236, Cys237–Cys245, Cys241–Cys253, Cys256–Cys265, Cys269–Cys296, Cys300–Cys312, Cys316–Cys332, Cys335–Cys339, Cys343–Cys368, Cys476–Cys506, Cys513–Cys522, and Cys517–Cys530. Asn260 carries N-linked (GlcNAc...) asparagine glycosylation. N-linked (GlcNAc...) asparagine glycosylation occurs at Asn532. Cystine bridges form between Cys533–Cys542, Cys546–Cys562, Cys565–Cys578, Cys569–Cys586, Cys589–Cys598, Cys602–Cys625, Cys628–Cys636, and Cys632–Cys644. Asn573 carries N-linked (GlcNAc...) asparagine glycosylation. The N-linked (GlcNAc...) asparagine glycan is linked to Asn631. A helical membrane pass occupies residues 655–677; it reads FIIATVVGVLLFLILVVVVGILI. A required for interaction with KPNB1 and EEA1 region spans residues 678–691; sequence KRRRQKIRKYTMRR. Positions 678 to 691 match the Nuclear localization signal motif; it reads KRRRQKIRKYTMRR. The Cytoplasmic portion of the chain corresponds to 678–1257; it reads KRRRQKIRKY…PEYLGLDVPV (580 aa). Residues 722 to 989 enclose the Protein kinase domain; it reads LRKVKVLGSG…RMARDPQRFV (268 aa). ATP-binding positions include 728–736 and Lys755; that span reads LGSGAFGTV. Asp847 (proton acceptor) is an active-site residue. Tyr879 bears the Phosphotyrosine mark. The tract at residues 1029-1181 is disordered; sequence QQGFFSPDPT…PKTLSPGKNG (153 aa). Phosphoserine occurs at positions 1056, 1080, 1085, and 1109. Tyr1114 carries the post-translational modification Phosphotyrosine. The residue at position 1141 (Tyr1141) is a Phosphotyrosine; by autocatalysis. Residues 1149 to 1163 show a composition bias toward pro residues; that stretch reads PQPPLTPEGPLPPVR. At Thr1168 the chain carries Phosphothreonine. The interaction with PIK3C2B stretch occupies residues 1197-1199; it reads EYL. The residue at position 1198 (Tyr1198) is a Phosphotyrosine. The disordered stretch occupies residues 1200–1257; it reads VPREGTASPPHPSPAFSPAFDNLYYWDQNSSEQGPPPSNFEGTPTAENPEYLGLDVPV. Tyr1250 carries the post-translational modification Phosphotyrosine; by autocatalysis.

The protein belongs to the protein kinase superfamily. Tyr protein kinase family. EGF receptor subfamily. Homodimer. Heterodimer with EGFR, ERBB3 and ERBB4. Part of a complex with EGFR and either PIK3C2A or PIK3C2B. May interact with PIK3C2B when phosphorylated on Tyr-1198. Interacts with PRKCABP and PLXNB1. Interacts (when phosphorylated on Tyr-1250) with MEMO1. Interacts with MUC1. Interacts (when phosphorylated on Tyr-1141) with GRB7 (via SH2 domain). Interacts (when phosphorylated on Tyr-1250) with ERBIN Interacts with SRC, KPNB1, RANBP2, EEA1, CRM1, CLTC, PTK6, RPA194, MYOC and ACTB. Interacts with HSP90AA1 and HSP90AB1; the interaction suppresses ERBB2 kinase activity. Interacts with SORL1; this interaction regulates ERBB2 subcellular distribution by promoting its recycling after internalization from endosomes back to the plasma membrane, hence stimulates ERBB2-mediated signaling. Interacts with SH3BGRL. Interacts with ROR1. Post-translationally, autophosphorylated. Autophosphorylation occurs in trans, i.e. one subunit of the dimeric receptor phosphorylates tyrosine residues on the other subunit. Ligand-binding increases phosphorylation on tyrosine residues. Signaling via SEMA4C promotes phosphorylation at Tyr-1250. Dephosphorylated by PTPN12.

Its subcellular location is the cell membrane. The protein resides in the cell projection. It localises to the ruffle membrane. It is found in the early endosome. The protein localises to the cytoplasm. Its subcellular location is the perinuclear region. The protein resides in the nucleus. It catalyses the reaction L-tyrosyl-[protein] + ATP = O-phospho-L-tyrosyl-[protein] + ADP + H(+). Functionally, protein tyrosine kinase that is part of several cell surface receptor complexes, but that apparently needs a coreceptor for ligand binding. Essential component of a neuregulin-receptor complex, although neuregulins do not interact with it alone. GP30 is a potential ligand for this receptor. Regulates outgrowth and stabilization of peripheral microtubules (MTs). Upon ERBB2 activation, the MEMO1-RHOA-DIAPH1 signaling pathway elicits the phosphorylation and thus the inhibition of GSK3B at cell membrane. This prevents the phosphorylation of APC and CLASP2, allowing its association with the cell membrane. In turn, membrane-bound APC allows the localization of MACF1 to the cell membrane, which is required for microtubule capture and stabilization. Interacts (preferentially with the tyrosine phosphorylated form) with CPNE3; this interaction occurs at the cell membrane and is increased in a growth factor heregulin-dependent manner. Its function is as follows. In the nucleus is involved in transcriptional regulation. Associates with the 5'-TCAAATTC-3' sequence in the PTGS2/COX-2 promoter and activates its transcription. Implicated in transcriptional activation of CDKN1A; the function involves STAT3 and SRC. Involved in the transcription of rRNA genes by RNA Pol I and enhances protein synthesis and cell growth. This is Receptor tyrosine-protein kinase erbB-2 (Erbb2) from Rattus norvegicus (Rat).